The primary structure comprises 1179 residues: DNA-directed RNA polymerase subunit beta (1179 aa).

This sequence belongs to the RNA polymerase beta chain family. The RNAP catalytic core consists of 2 alpha, 1 beta, 1 beta' and 1 omega subunit. When a sigma factor is associated with the core the holoenzyme is formed, which can initiate transcription.

The catalysed reaction is RNA(n) + a ribonucleoside 5'-triphosphate = RNA(n+1) + diphosphate. Its function is as follows. DNA-dependent RNA polymerase catalyzes the transcription of DNA into RNA using the four ribonucleoside triphosphates as substrates. This Oceanobacillus iheyensis (strain DSM 14371 / CIP 107618 / JCM 11309 / KCTC 3954 / HTE831) protein is DNA-directed RNA polymerase subunit beta.